The chain runs to 834 residues: DNA gyrase subunit A (834 aa).

Residues 34–500 (LPDIRDGLKP…ADDIRDIEDI (467 aa)) enclose the Topo IIA-type catalytic domain. Tyr122 (O-(5'-phospho-DNA)-tyrosine intermediate) is an active-site residue. A GyrA-box motif is present at residues 527–533 (QRRGGHG). The interval 810–834 (LSSNENDDEVLSGSEEECSDTVSLR) is disordered. Residues 814–828 (ENDDEVLSGSEEECS) are compositionally biased toward acidic residues.

It belongs to the type II topoisomerase GyrA/ParC subunit family. As to quaternary structure, heterotetramer, composed of two GyrA and two GyrB chains. In the heterotetramer, GyrA contains the active site tyrosine that forms a transient covalent intermediate with DNA, while GyrB binds cofactors and catalyzes ATP hydrolysis.

The protein resides in the cytoplasm. It catalyses the reaction ATP-dependent breakage, passage and rejoining of double-stranded DNA.. A type II topoisomerase that negatively supercoils closed circular double-stranded (ds) DNA in an ATP-dependent manner to modulate DNA topology and maintain chromosomes in an underwound state. Negative supercoiling favors strand separation, and DNA replication, transcription, recombination and repair, all of which involve strand separation. Also able to catalyze the interconversion of other topological isomers of dsDNA rings, including catenanes and knotted rings. Type II topoisomerases break and join 2 DNA strands simultaneously in an ATP-dependent manner. The chain is DNA gyrase subunit A from Chlamydia pneumoniae (Chlamydophila pneumoniae).